Consider the following 651-residue polypeptide: Acetyl-coenzyme A synthetase (651 aa).

Residues Arg189–Lys192, Thr311, and Asn335 contribute to the CoA site. Residues Gly387–Pro389, Asp411–Thr416, Asp500, and Arg515 contribute to the ATP site. Position 523 (Ser523) interacts with CoA. Residue Arg526 coordinates ATP. 3 residues coordinate Mg(2+): Val537, His539, and Val542. Arg586 contributes to the CoA binding site. Lys611 bears the N6-acetyllysine mark.

It belongs to the ATP-dependent AMP-binding enzyme family. Requires Mg(2+) as cofactor. Post-translationally, acetylated. Deacetylation by the SIR2-homolog deacetylase activates the enzyme.

The catalysed reaction is acetate + ATP + CoA = acetyl-CoA + AMP + diphosphate. In terms of biological role, catalyzes the conversion of acetate into acetyl-CoA (AcCoA), an essential intermediate at the junction of anabolic and catabolic pathways. AcsA undergoes a two-step reaction. In the first half reaction, AcsA combines acetate with ATP to form acetyl-adenylate (AcAMP) intermediate. In the second half reaction, it can then transfer the acetyl group from AcAMP to the sulfhydryl group of CoA, forming the product AcCoA. In Brucella abortus (strain S19), this protein is Acetyl-coenzyme A synthetase.